We begin with the raw amino-acid sequence, 193 residues long: Thymidylate kinase (193 aa).

7 to 14 (GIDGCGKS) provides a ligand contact to ATP.

This sequence belongs to the thymidylate kinase family.

The catalysed reaction is dTMP + ATP = dTDP + ADP. In terms of biological role, phosphorylation of dTMP to form dTDP in both de novo and salvage pathways of dTTP synthesis. The polypeptide is Thymidylate kinase (Coprothermobacter proteolyticus (strain ATCC 35245 / DSM 5265 / OCM 4 / BT)).